Consider the following 414-residue polypeptide: Gamma-glutamyl phosphate reductase (414 aa).

This sequence belongs to the gamma-glutamyl phosphate reductase family.

The protein localises to the cytoplasm. It carries out the reaction L-glutamate 5-semialdehyde + phosphate + NADP(+) = L-glutamyl 5-phosphate + NADPH + H(+). Its pathway is amino-acid biosynthesis; L-proline biosynthesis; L-glutamate 5-semialdehyde from L-glutamate: step 2/2. Functionally, catalyzes the NADPH-dependent reduction of L-glutamate 5-phosphate into L-glutamate 5-semialdehyde and phosphate. The product spontaneously undergoes cyclization to form 1-pyrroline-5-carboxylate. The sequence is that of Gamma-glutamyl phosphate reductase from Clostridium beijerinckii (strain ATCC 51743 / NCIMB 8052) (Clostridium acetobutylicum).